Reading from the N-terminus, the 154-residue chain is Deoxyuridine 5'-triphosphate nucleotidohydrolase (154 aa).

Substrate-binding positions include 64–66 (RSG), asparagine 77, 81–83 (TVD), and lysine 91.

It belongs to the dUTPase family. Homotrimer. Requires Mg(2+) as cofactor.

The catalysed reaction is dUTP + H2O = dUMP + diphosphate + H(+). Its pathway is pyrimidine metabolism; dUMP biosynthesis; dUMP from dCTP (dUTP route): step 2/2. Its function is as follows. This enzyme is involved in nucleotide metabolism: it produces dUMP, the immediate precursor of thymidine nucleotides and it decreases the intracellular concentration of dUTP so that uracil cannot be incorporated into DNA. The protein is Deoxyuridine 5'-triphosphate nucleotidohydrolase of Mycolicibacterium gilvum (strain PYR-GCK) (Mycobacterium gilvum (strain PYR-GCK)).